The primary structure comprises 304 residues: Oxygen-dependent coproporphyrinogen-III oxidase (304 aa).

Ser-93 lines the substrate pocket. Residues His-97 and His-107 each coordinate a divalent metal cation. His-107 (proton donor) is an active-site residue. Residue 109–111 (NVR) coordinates substrate. A divalent metal cation is bound by residues His-146 and His-176. The interval 241 to 276 (YVEFNLVYDRGTLFGLQSGGRTESILMSLPPQVRWG) is important for dimerization. 259–261 (GGR) is a binding site for substrate.

It belongs to the aerobic coproporphyrinogen-III oxidase family. As to quaternary structure, homodimer. The cofactor is a divalent metal cation.

It is found in the cytoplasm. The catalysed reaction is coproporphyrinogen III + O2 + 2 H(+) = protoporphyrinogen IX + 2 CO2 + 2 H2O. It functions in the pathway porphyrin-containing compound metabolism; protoporphyrin-IX biosynthesis; protoporphyrinogen-IX from coproporphyrinogen-III (O2 route): step 1/1. Involved in the heme biosynthesis. Catalyzes the aerobic oxidative decarboxylation of propionate groups of rings A and B of coproporphyrinogen-III to yield the vinyl groups in protoporphyrinogen-IX. The protein is Oxygen-dependent coproporphyrinogen-III oxidase of Pseudomonas savastanoi pv. phaseolicola (strain 1448A / Race 6) (Pseudomonas syringae pv. phaseolicola (strain 1448A / Race 6)).